Here is a 214-residue protein sequence, read N- to C-terminus: Probable nicotinate-nucleotide adenylyltransferase (214 aa).

Belongs to the NadD family.

It catalyses the reaction nicotinate beta-D-ribonucleotide + ATP + H(+) = deamido-NAD(+) + diphosphate. It participates in cofactor biosynthesis; NAD(+) biosynthesis; deamido-NAD(+) from nicotinate D-ribonucleotide: step 1/1. In terms of biological role, catalyzes the reversible adenylation of nicotinate mononucleotide (NaMN) to nicotinic acid adenine dinucleotide (NaAD). In Rubrobacter xylanophilus (strain DSM 9941 / JCM 11954 / NBRC 16129 / PRD-1), this protein is Probable nicotinate-nucleotide adenylyltransferase.